We begin with the raw amino-acid sequence, 170 residues long: NADH-quinone oxidoreductase subunit B (170 aa).

4 residues coordinate [4Fe-4S] cluster: cysteine 37, cysteine 38, cysteine 102, and cysteine 131.

Belongs to the complex I 20 kDa subunit family. As to quaternary structure, NDH-1 is composed of 14 different subunits. Subunits NuoB, C, D, E, F, and G constitute the peripheral sector of the complex. It depends on [4Fe-4S] cluster as a cofactor.

The protein localises to the cell inner membrane. It catalyses the reaction a quinone + NADH + 5 H(+)(in) = a quinol + NAD(+) + 4 H(+)(out). In terms of biological role, NDH-1 shuttles electrons from NADH, via FMN and iron-sulfur (Fe-S) centers, to quinones in the respiratory chain. The immediate electron acceptor for the enzyme in this species is believed to be ubiquinone. Couples the redox reaction to proton translocation (for every two electrons transferred, four hydrogen ions are translocated across the cytoplasmic membrane), and thus conserves the redox energy in a proton gradient. The chain is NADH-quinone oxidoreductase subunit B from Geobacter sulfurreducens (strain ATCC 51573 / DSM 12127 / PCA).